Here is a 381-residue protein sequence, read N- to C-terminus: NAD-dependent methanol dehydrogenase (381 aa).

The protein belongs to the iron-containing alcohol dehydrogenase family. As to quaternary structure, homodecamer. The cofactor is Mg(2+). Requires Zn(2+) as cofactor.

It localises to the cytoplasm. The enzyme catalyses methanol + NAD(+) = formaldehyde + NADH + H(+). Its pathway is one-carbon metabolism; methanol degradation; formaldehyde from methanol: step 1/1. With respect to regulation, stimulated by the activator protein Act which requires the presence of magnesium ions. Inhibited by 1,10-phenanthroline. Its function is as follows. Catalyzes the oxidation of methanol to yield formaldehyde. It possesses a NADH-dependent formaldehyde reductase activity and cannot use NADP. In Bacillus methanolicus, this protein is NAD-dependent methanol dehydrogenase.